The primary structure comprises 173 residues: Alkyl hydroperoxide reductase AhpD (173 aa).

Cysteine 131 functions as the Proton donor in the catalytic mechanism. A disulfide bond links cysteine 131 and cysteine 134. The active-site Cysteine sulfenic acid (-SOH) intermediate is cysteine 134.

This sequence belongs to the AhpD family.

The catalysed reaction is N(6)-[(R)-dihydrolipoyl]-L-lysyl-[lipoyl-carrier protein] + a hydroperoxide = N(6)-[(R)-lipoyl]-L-lysyl-[lipoyl-carrier protein] + an alcohol + H2O. In terms of biological role, antioxidant protein with alkyl hydroperoxidase activity. Required for the reduction of the AhpC active site cysteine residues and for the regeneration of the AhpC enzyme activity. The polypeptide is Alkyl hydroperoxide reductase AhpD (Maricaulis maris (strain MCS10) (Caulobacter maris)).